Reading from the N-terminus, the 207-residue chain is Holliday junction branch migration complex subunit RuvA (207 aa).

The segment at 1–64 (MIGLISGQVQ…EDAQLLYGFI (64 aa)) is domain I. Residues 65-143 (DRKERDVFRQ…NIEVDNSNLE (79 aa)) form a domain II region. The tract at residues 144–152 (FAIQPAPIS) is flexible linker. The domain III stretch occupies residues 153–207 (AEDSIIAEVEGALMSLGYKEKEAQQAIKAAKSNGETFADTQSLLKATLQQFQSFK).

Belongs to the RuvA family. Homotetramer. Forms an RuvA(8)-RuvB(12)-Holliday junction (HJ) complex. HJ DNA is sandwiched between 2 RuvA tetramers; dsDNA enters through RuvA and exits via RuvB. An RuvB hexamer assembles on each DNA strand where it exits the tetramer. Each RuvB hexamer is contacted by two RuvA subunits (via domain III) on 2 adjacent RuvB subunits; this complex drives branch migration. In the full resolvosome a probable DNA-RuvA(4)-RuvB(12)-RuvC(2) complex forms which resolves the HJ.

Its subcellular location is the cytoplasm. The RuvA-RuvB-RuvC complex processes Holliday junction (HJ) DNA during genetic recombination and DNA repair, while the RuvA-RuvB complex plays an important role in the rescue of blocked DNA replication forks via replication fork reversal (RFR). RuvA specifically binds to HJ cruciform DNA, conferring on it an open structure. The RuvB hexamer acts as an ATP-dependent pump, pulling dsDNA into and through the RuvAB complex. HJ branch migration allows RuvC to scan DNA until it finds its consensus sequence, where it cleaves and resolves the cruciform DNA. This Psychrobacter arcticus (strain DSM 17307 / VKM B-2377 / 273-4) protein is Holliday junction branch migration complex subunit RuvA.